A 108-amino-acid polypeptide reads, in one-letter code: UPF0060 membrane protein BH2744 (108 aa).

Helical transmembrane passes span 6–26 (TLFL…WLWL), 31–51 (PVYL…IATF), 60–80 (VYAA…WWID), and 86–106 (TYDW…LWAP).

Belongs to the UPF0060 family.

Its subcellular location is the cell membrane. The protein is UPF0060 membrane protein BH2744 of Halalkalibacterium halodurans (strain ATCC BAA-125 / DSM 18197 / FERM 7344 / JCM 9153 / C-125) (Bacillus halodurans).